Here is a 330-residue protein sequence, read N- to C-terminus: Phosphate acyltransferase (330 aa).

Belongs to the PlsX family. Homodimer. Probably interacts with PlsY.

The protein localises to the cytoplasm. The enzyme catalyses a fatty acyl-[ACP] + phosphate = an acyl phosphate + holo-[ACP]. Its pathway is lipid metabolism; phospholipid metabolism. In terms of biological role, catalyzes the reversible formation of acyl-phosphate (acyl-PO(4)) from acyl-[acyl-carrier-protein] (acyl-ACP). This enzyme utilizes acyl-ACP as fatty acyl donor, but not acyl-CoA. The sequence is that of Phosphate acyltransferase from Streptococcus agalactiae serotype Ia (strain ATCC 27591 / A909 / CDC SS700).